We begin with the raw amino-acid sequence, 577 residues long: Proline--tRNA ligase (577 aa).

This sequence belongs to the class-II aminoacyl-tRNA synthetase family. ProS type 1 subfamily. In terms of assembly, homodimer.

It localises to the cytoplasm. The enzyme catalyses tRNA(Pro) + L-proline + ATP = L-prolyl-tRNA(Pro) + AMP + diphosphate. Functionally, catalyzes the attachment of proline to tRNA(Pro) in a two-step reaction: proline is first activated by ATP to form Pro-AMP and then transferred to the acceptor end of tRNA(Pro). As ProRS can inadvertently accommodate and process non-cognate amino acids such as alanine and cysteine, to avoid such errors it has two additional distinct editing activities against alanine. One activity is designated as 'pretransfer' editing and involves the tRNA(Pro)-independent hydrolysis of activated Ala-AMP. The other activity is designated 'posttransfer' editing and involves deacylation of mischarged Ala-tRNA(Pro). The misacylated Cys-tRNA(Pro) is not edited by ProRS. The polypeptide is Proline--tRNA ligase (Helicobacter pylori (strain ATCC 700392 / 26695) (Campylobacter pylori)).